The following is a 249-amino-acid chain: FMN reductase (NADPH) (249 aa).

The protein belongs to the flavin oxidoreductase frp family. In terms of assembly, homodimer.

The enzyme catalyses FMNH2 + NADP(+) = FMN + NADPH + 2 H(+). Reduces FMNH(2) to FMN, with NADPH as reductant. It also reduces nitroaromatic compounds, quinones and azo dyes. This Bacillus subtilis (strain 168) protein is FMN reductase (NADPH) (nfrA1).